The following is a 350-amino-acid chain: Protein-glutamate methylesterase/protein-glutamine glutaminase 1 (350 aa).

Positions 3–121 (KVLIVEDSPV…RDYDIRARDL (119 aa)) constitute a Response regulatory domain. D54 bears the 4-aspartylphosphate mark. In terms of domain architecture, CheB-type methylesterase spans 148 to 342 (PASGEPDIGK…PPEKIARVLV (195 aa)). Catalysis depends on residues S170, H197, and D290.

The protein belongs to the CheB family. Post-translationally, phosphorylated by CheA. Phosphorylation of the N-terminal regulatory domain activates the methylesterase activity.

It is found in the cytoplasm. It catalyses the reaction [protein]-L-glutamate 5-O-methyl ester + H2O = L-glutamyl-[protein] + methanol + H(+). It carries out the reaction L-glutaminyl-[protein] + H2O = L-glutamyl-[protein] + NH4(+). In terms of biological role, involved in chemotaxis. Part of a chemotaxis signal transduction system that modulates chemotaxis in response to various stimuli. Catalyzes the demethylation of specific methylglutamate residues introduced into the chemoreceptors (methyl-accepting chemotaxis proteins or MCP) by CheR. Also mediates the irreversible deamidation of specific glutamine residues to glutamic acid. This is Protein-glutamate methylesterase/protein-glutamine glutaminase 1 from Syntrophus aciditrophicus (strain SB).